The sequence spans 247 residues: Adenylyl-sulfate kinase (247 aa).

The segment at 1–24 (MSQSNSDDSASSSTQQAGDGQDDV) is disordered. 55-62 (GLSGCGKS) contributes to the ATP binding site. The active-site Phosphoserine intermediate is Ser146.

It belongs to the APS kinase family.

The catalysed reaction is adenosine 5'-phosphosulfate + ATP = 3'-phosphoadenylyl sulfate + ADP + H(+). The protein operates within sulfur metabolism; hydrogen sulfide biosynthesis; sulfite from sulfate: step 2/3. Functionally, catalyzes the synthesis of activated sulfate. This Rhodopirellula baltica (strain DSM 10527 / NCIMB 13988 / SH1) protein is Adenylyl-sulfate kinase.